The following is a 908-amino-acid chain: Protein O-mannosyltransferase 1 (908 aa).

Disordered stretches follow at residues 1-85 (MYNN…SAIN) and 115-160 (GSVE…SGSR). Positions 21 to 31 (QRRKTTTRSRS) are enriched in basic residues. 2 stretches are compositionally biased toward polar residues: residues 39 to 54 (CTSENVIEKNQTNGAQ) and 132 to 149 (LTATPTTTPKQASPSPTI). Residues 190–210 (FTVNLSIDLFSWTLFLLAFCT) traverse the membrane as a helical segment. The N-linked (GlcNAc...) asparagine glycan is linked to Asn265. 5 helical membrane passes run 279-299 (VPIFWFRFIPALCGSLLAPAV), 311-328 (WAAALGGLLVVLDNSLLT), 331-351 (RFVLMESMLLLASTLGIACLL), 370-390 (AGVLLACAGAVKYIGFLALAL), and 418-438 (LSRLLLFVGIPIAVYIGVFYV). MIR domains follow at residues 473–534 (PLAV…VKRP), 545–602 (PDVI…VEIL), and 608–664 (GDSW…VEEH). 4 helical membrane-spanning segments follow: residues 749 to 769 (VLIWYTASAGILVYATLLAFY), 788 to 808 (FLMAGDTFFVGYMMHYLPYYF), 813 to 833 (LFLHNYLPAFVFKLLLLCFVV), and 857 to 877 (LALLLWLLAVGSVFVKFLPLS).

Belongs to the glycosyltransferase 39 family. In terms of assembly, interacts with tw/POMT2.

Its subcellular location is the endoplasmic reticulum membrane. It carries out the reaction a di-trans,poly-cis-dolichyl beta-D-mannosyl phosphate + L-seryl-[protein] = 3-O-(alpha-D-mannosyl)-L-seryl-[protein] + a di-trans,poly-cis-dolichyl phosphate + H(+). It catalyses the reaction a di-trans,poly-cis-dolichyl beta-D-mannosyl phosphate + L-threonyl-[protein] = 3-O-(alpha-D-mannosyl)-L-threonyl-[protein] + a di-trans,poly-cis-dolichyl phosphate + H(+). Its pathway is protein modification; protein glycosylation. In terms of biological role, rt/POMT1 and tw/POMT2 function as a protein O-mannosyltransferase in association with each other to generate and maintain normal muscle development. The polypeptide is Protein O-mannosyltransferase 1 (Drosophila pseudoobscura pseudoobscura (Fruit fly)).